The chain runs to 156 residues: MSRKGHIKKRDVQPDPIYNSKLVTKTINTIMEDGKKGKAQTIFYQALKQVKTITNRDPIEVFHEALNNIMPVLEVRTRRVGGQNYQVPSEVRPERRHSLGLRWLVKYTKERNEKTMEERLAKEIVDASLGNGVSVKKREETHRMAEANKAFAHYRW.

Belongs to the universal ribosomal protein uS7 family. As to quaternary structure, part of the 30S ribosomal subunit. Contacts proteins S9 and S11.

Functionally, one of the primary rRNA binding proteins, it binds directly to 16S rRNA where it nucleates assembly of the head domain of the 30S subunit. Is located at the subunit interface close to the decoding center, probably blocks exit of the E-site tRNA. This is Small ribosomal subunit protein uS7 from Aster yellows witches'-broom phytoplasma (strain AYWB).